Reading from the N-terminus, the 473-residue chain is MDVPLASKTFPSPSPSKREQCNIDGHKSSSKHADLNPHVDDSVLGIILGGGAGTRLYPLTKKRAKPAVPLGANYRLIDIPVSNCLNSNISKIYVRTQFNSASLNRHLSRAYGSNIGGYKNEGFVEVLAAQQSPDNPDWFQGTADAVRQYLWLFEEHNVMEYLILAGDHLYRMDYEKFIQAHRETDADITVAALPMDEERATAFGLMKIDEEGRIIEFAEKPKGEQLKAMMVDTTILGLDDARAKEMPYIASMGIYVISKHVMLQLLREQFPGANDFGSEVIPGATSTGMRVQAYLYDGYWEDIGTIEAFYNANLGITKKPIPDFSFYDRSAPIYTQPRHLPPSKVLDADVTDSVIGEGCVIKNCKIHHSVVGLRSCISEGAIIEDTLLMGADYYETEADKKLLAEKGGIPIGIGKNSHIKRAIIDKNARIGDNVMIINVDNVQEAARETDGYFIKSGIVTVIKDALLPSGTVI.

Residues 1-36 (MDVPLASKTFPSPSPSKREQCNIDGHKSSSKHADLN) are disordered. Residues 16–36 (SKREQCNIDGHKSSSKHADLN) are compositionally biased toward basic and acidic residues.

This sequence belongs to the bacterial/plant glucose-1-phosphate adenylyltransferase family. As to quaternary structure, heterotetramer. Abundantly expressed in the whole grains, a slightly less abundant expression is seen in leaves, while a low level expression is seen in the roots. A greater expression is seen in the endosperm than in the embryo and pericarp layers.

The protein localises to the plastid. The protein resides in the chloroplast. Its subcellular location is the amyloplast. It catalyses the reaction alpha-D-glucose 1-phosphate + ATP + H(+) = ADP-alpha-D-glucose + diphosphate. It participates in glycan biosynthesis; starch biosynthesis. Its activity is regulated as follows. Insensitive to 3'phosphoglycerate and orthophosphate. Functionally, this protein plays a role in synthesis of starch. It catalyzes the synthesis of the activated glycosyl donor, ADP-glucose from Glc-1-P and ATP. The polypeptide is Glucose-1-phosphate adenylyltransferase small subunit, chloroplastic/amyloplastic (AGP-S) (Triticum aestivum (Wheat)).